A 64-amino-acid chain; its full sequence is Cytochrome c oxidase subunit 2 (64 aa).

Residues 1–14 (MAHPSQLGFQDAAS) are Mitochondrial intermembrane-facing. The helical transmembrane segment at 15 to 45 (PVMEELXHFHDHTLMIVFLISTLVXYIIVAM) threads the bilayer. Residues 46–64 (VSTKLTNKYVLDSQEIEIV) are Mitochondrial matrix-facing.

The protein belongs to the cytochrome c oxidase subunit 2 family. Component of the cytochrome c oxidase (complex IV, CIV), a multisubunit enzyme composed of 14 subunits. The complex is composed of a catalytic core of 3 subunits MT-CO1, MT-CO2 and MT-CO3, encoded in the mitochondrial DNA, and 11 supernumerary subunits COX4I, COX5A, COX5B, COX6A, COX6B, COX6C, COX7A, COX7B, COX7C, COX8 and NDUFA4, which are encoded in the nuclear genome. The complex exists as a monomer or a dimer and forms supercomplexes (SCs) in the inner mitochondrial membrane with NADH-ubiquinone oxidoreductase (complex I, CI) and ubiquinol-cytochrome c oxidoreductase (cytochrome b-c1 complex, complex III, CIII), resulting in different assemblies (supercomplex SCI(1)III(2)IV(1) and megacomplex MCI(2)III(2)IV(2)). Found in a complex with TMEM177, COA6, COX18, COX20, SCO1 and SCO2. Interacts with TMEM177 in a COX20-dependent manner. Interacts with COX20. Interacts with COX16. The cofactor is Cu cation.

It is found in the mitochondrion inner membrane. It carries out the reaction 4 Fe(II)-[cytochrome c] + O2 + 8 H(+)(in) = 4 Fe(III)-[cytochrome c] + 2 H2O + 4 H(+)(out). Functionally, component of the cytochrome c oxidase, the last enzyme in the mitochondrial electron transport chain which drives oxidative phosphorylation. The respiratory chain contains 3 multisubunit complexes succinate dehydrogenase (complex II, CII), ubiquinol-cytochrome c oxidoreductase (cytochrome b-c1 complex, complex III, CIII) and cytochrome c oxidase (complex IV, CIV), that cooperate to transfer electrons derived from NADH and succinate to molecular oxygen, creating an electrochemical gradient over the inner membrane that drives transmembrane transport and the ATP synthase. Cytochrome c oxidase is the component of the respiratory chain that catalyzes the reduction of oxygen to water. Electrons originating from reduced cytochrome c in the intermembrane space (IMS) are transferred via the dinuclear copper A center (CU(A)) of subunit 2 and heme A of subunit 1 to the active site in subunit 1, a binuclear center (BNC) formed by heme A3 and copper B (CU(B)). The BNC reduces molecular oxygen to 2 water molecules using 4 electrons from cytochrome c in the IMS and 4 protons from the mitochondrial matrix. The protein is Cytochrome c oxidase subunit 2 (mt-co2) of Scaphirhynchus platorynchus (Shovelnose sturgeon).